We begin with the raw amino-acid sequence, 170 residues long: Co-chaperone protein HscB homolog (170 aa).

In terms of domain architecture, J spans 5-79; it reads DHFSLFGLPT…RARYLCEQAG (75 aa).

The protein belongs to the HscB family. In terms of assembly, interacts with HscA and stimulates its ATPase activity.

In terms of biological role, co-chaperone involved in the maturation of iron-sulfur cluster-containing proteins. Seems to help targeting proteins to be folded toward HscA. This is Co-chaperone protein HscB homolog from Bordetella bronchiseptica (strain ATCC BAA-588 / NCTC 13252 / RB50) (Alcaligenes bronchisepticus).